The sequence spans 439 residues: 26S proteasome regulatory subunit 6A (439 aa).

N-acetylmethionine is present on M1. A Phosphoserine modification is found at S9. An ATP-binding site is contributed by 227–234 (GPPGTGKT). Phosphoserine is present on S376.

The protein belongs to the AAA ATPase family. In terms of assembly, component of the 19S proteasome regulatory particle complex. The 26S proteasome consists of a 20S core particle (CP) and two 19S regulatory subunits (RP). The regulatory particle is made of a lid composed of 9 subunits, a base containing 6 ATPases including PSMC3 and few additional components. Interacts with PAAF1.

It is found in the cytoplasm. The protein resides in the nucleus. Component of the 26S proteasome, a multiprotein complex involved in the ATP-dependent degradation of ubiquitinated proteins. This complex plays a key role in the maintenance of protein homeostasis by removing misfolded or damaged proteins, which could impair cellular functions, and by removing proteins whose functions are no longer required. Therefore, the proteasome participates in numerous cellular processes, including cell cycle progression, apoptosis, or DNA damage repair. PSMC3 belongs to the heterohexameric ring of AAA (ATPases associated with diverse cellular activities) proteins that unfolds ubiquitinated target proteins that are concurrently translocated into a proteolytic chamber and degraded into peptides. This is 26S proteasome regulatory subunit 6A (Psmc3) from Rattus norvegicus (Rat).